The following is a 475-amino-acid chain: Pup--protein ligase (475 aa).

Glu-19 is a binding site for Mg(2+). Arg-64 provides a ligand contact to ATP. Mg(2+) is bound at residue Tyr-66. Catalysis depends on Asp-68, which acts as the Proton acceptor. Glu-74 lines the Mg(2+) pocket. The ATP site is built by Thr-77 and Trp-436.

It belongs to the Pup ligase/Pup deamidase family. Pup-conjugating enzyme subfamily.

It catalyses the reaction ATP + [prokaryotic ubiquitin-like protein]-L-glutamate + [protein]-L-lysine = ADP + phosphate + N(6)-([prokaryotic ubiquitin-like protein]-gamma-L-glutamyl)-[protein]-L-lysine.. It participates in protein degradation; proteasomal Pup-dependent pathway. The protein operates within protein modification; protein pupylation. Its function is as follows. Catalyzes the covalent attachment of the prokaryotic ubiquitin-like protein modifier Pup to the proteasomal substrate proteins, thereby targeting them for proteasomal degradation. This tagging system is termed pupylation. The ligation reaction involves the side-chain carboxylate of the C-terminal glutamate of Pup and the side-chain amino group of a substrate lysine. The sequence is that of Pup--protein ligase from Corynebacterium aurimucosum (strain ATCC 700975 / DSM 44827 / CIP 107346 / CN-1) (Corynebacterium nigricans).